The following is a 351-amino-acid chain: Glycerol-3-phosphate dehydrogenase 1-like protein (351 aa).

Residue 12–17 coordinates NAD(+); the sequence is GSGNWG. Position 122 (Lys122) interacts with substrate. NAD(+) is bound at residue Ala155. The Proton acceptor role is filled by Lys206. 3 residues coordinate NAD(+): Arg271, Lys298, and Gln300. 271-272 is a binding site for substrate; the sequence is RN.

The protein belongs to the NAD-dependent glycerol-3-phosphate dehydrogenase family. Interacts with SCN5A.

The protein localises to the cytoplasm. It catalyses the reaction sn-glycerol 3-phosphate + NAD(+) = dihydroxyacetone phosphate + NADH + H(+). Functionally, plays a role in regulating cardiac sodium current; decreased enzymatic activity with resulting increased levels of glycerol 3-phosphate activating the DPD1L-dependent SCN5A phosphorylation pathway, may ultimately lead to decreased sodium current; cardiac sodium current may also be reduced due to alterations of NAD(H) balance induced by DPD1L. This Mus musculus (Mouse) protein is Glycerol-3-phosphate dehydrogenase 1-like protein (Gpd1l).